A 165-amino-acid chain; its full sequence is 3-isopropylmalate dehydratase small subunit (165 aa).

This sequence belongs to the LeuD family. LeuD type 2 subfamily. As to quaternary structure, heterodimer of LeuC and LeuD.

The enzyme catalyses (2R,3S)-3-isopropylmalate = (2S)-2-isopropylmalate. It participates in amino-acid biosynthesis; L-leucine biosynthesis; L-leucine from 3-methyl-2-oxobutanoate: step 2/4. Its function is as follows. Catalyzes the isomerization between 2-isopropylmalate and 3-isopropylmalate, via the formation of 2-isopropylmaleate. This Lachnoclostridium phytofermentans (strain ATCC 700394 / DSM 18823 / ISDg) (Clostridium phytofermentans) protein is 3-isopropylmalate dehydratase small subunit.